A 790-amino-acid polypeptide reads, in one-letter code: Mitochondrial intermediate peptidase (790 aa).

The N-terminal 29 residues, 1–29 (MLKRLARNNSSPWICSRCLQQSQRQRRFN), are a transit peptide targeting the mitochondrion. A Zn(2+)-binding site is contributed by H570. E571 is an active-site residue. Residues H574 and H577 each contribute to the Zn(2+) site.

This sequence belongs to the peptidase M3 family. Zn(2+) serves as cofactor.

The protein localises to the mitochondrion matrix. The enzyme catalyses Release of an N-terminal octapeptide as second stage of processing of some proteins imported into the mitochondrion.. Cleaves proteins, imported into the mitochondrion, to their mature size. While most mitochondrial precursor proteins are processed to the mature form in one step by mitochondrial processing peptidase (MPP), the sequential cleavage by MIP of an octapeptide after initial processing by MPP is a required step for a subgroup of nuclear-encoded precursor proteins destined for the matrix or the inner membrane. The sequence is that of Mitochondrial intermediate peptidase (OCT1) from Phaeosphaeria nodorum (strain SN15 / ATCC MYA-4574 / FGSC 10173) (Glume blotch fungus).